Here is a 27-residue protein sequence, read N- to C-terminus: Toxin TdII-4 (27 aa).

The 27-residue stretch at 1-27 folds into the LCN-type CS-alpha/beta domain; that stretch reads KDGYLMEPNGCKLGCLTRPAKYCWXEE.

This sequence belongs to the long (4 C-C) scorpion toxin superfamily. Sodium channel inhibitor family. Beta subfamily. Expressed by the venom gland.

It is found in the secreted. Beta toxins bind voltage-independently at site-4 of sodium channels (Nav) and shift the voltage of activation toward more negative potentials thereby affecting sodium channel activation and promoting spontaneous and repetitive firing. This toxin is active against mammals and also affects neuromuscular preparations of frog. In Tityus discrepans (Venezuelan scorpion), this protein is Toxin TdII-4.